Consider the following 214-residue polypeptide: Uracil phosphoribosyltransferase (214 aa).

5-phospho-alpha-D-ribose 1-diphosphate-binding positions include Arg107 and 135-143; that span reads DPMLATGKT. Uracil is bound by residues Ile198 and 203-205; that span reads GDA. A 5-phospho-alpha-D-ribose 1-diphosphate-binding site is contributed by Asp204.

Belongs to the UPRTase family. The cofactor is Mg(2+).

The enzyme catalyses UMP + diphosphate = 5-phospho-alpha-D-ribose 1-diphosphate + uracil. It functions in the pathway pyrimidine metabolism; UMP biosynthesis via salvage pathway; UMP from uracil: step 1/1. Its activity is regulated as follows. Allosterically activated by GTP. In terms of biological role, catalyzes the conversion of uracil and 5-phospho-alpha-D-ribose 1-diphosphate (PRPP) to UMP and diphosphate. This Aeropyrum pernix (strain ATCC 700893 / DSM 11879 / JCM 9820 / NBRC 100138 / K1) protein is Uracil phosphoribosyltransferase.